The sequence spans 344 residues: Inositol 2-dehydrogenase/D-chiro-inositol 3-dehydrogenase (344 aa).

The protein belongs to the Gfo/Idh/MocA family. Homotetramer.

It catalyses the reaction myo-inositol + NAD(+) = scyllo-inosose + NADH + H(+). It carries out the reaction 1D-chiro-inositol + NAD(+) = scyllo-inosine + NADH + H(+). The protein operates within polyol metabolism; myo-inositol degradation into acetyl-CoA; acetyl-CoA from myo-inositol: step 1/7. Functionally, involved in the oxidation of myo-inositol (MI) and D-chiro-inositol (DCI) to 2-keto-myo-inositol (2KMI or 2-inosose) and 1-keto-D-chiro-inositol (1KDCI), respectively. Can also use D-glucose and D-xylose, and shows a trace of activity with D-ribose and D-fructose. The chain is Inositol 2-dehydrogenase/D-chiro-inositol 3-dehydrogenase (iolG) from Bacillus subtilis (strain 168).